Consider the following 203-residue polypeptide: Glycerol-3-phosphate acyltransferase (203 aa).

5 consecutive transmembrane segments (helical) span residues isoleucine 5–leucine 25, leucine 55–alanine 75, isoleucine 84–valine 104, isoleucine 118–alanine 138, and isoleucine 159–leucine 179.

Belongs to the PlsY family. In terms of assembly, probably interacts with PlsX.

The protein resides in the cell inner membrane. The enzyme catalyses an acyl phosphate + sn-glycerol 3-phosphate = a 1-acyl-sn-glycero-3-phosphate + phosphate. It functions in the pathway lipid metabolism; phospholipid metabolism. Catalyzes the transfer of an acyl group from acyl-phosphate (acyl-PO(4)) to glycerol-3-phosphate (G3P) to form lysophosphatidic acid (LPA). This enzyme utilizes acyl-phosphate as fatty acyl donor, but not acyl-CoA or acyl-ACP. This chain is Glycerol-3-phosphate acyltransferase, found in Rhodopseudomonas palustris (strain ATCC BAA-98 / CGA009).